A 908-amino-acid polypeptide reads, in one-letter code: 5'-3' exoribonuclease 2 homolog (908 aa).

The CCHC-type zinc finger occupies 263–280 (RPCDICNGFGHEMDKCVG). 2 disordered regions span residues 409–457 (RQRR…VGNY) and 821–908 (GGNQ…YRRF). Polar residues predominate over residues 432-454 (HGSLNQSAFGASAVGPNSQQRSV). Serine 438 is subject to Phosphoserine. Composition is skewed to low complexity over residues 825–868 (GQSY…HNQR) and 878–908 (QRNF…YRRF).

The protein belongs to the 5'-3' exonuclease family. XRN2/RAT1 subfamily. As to quaternary structure, interacts with cuff and Rai1; the interaction with cuff may inhibit its role in RNA degradation.

The protein localises to the nucleus. A 5'-3' exoribonuclease. May promote the termination of transcription by RNA polymerase II and promote RNA degradation. Involved in turnover of piRNA precursors. This chain is 5'-3' exoribonuclease 2 homolog, found in Drosophila melanogaster (Fruit fly).